The chain runs to 295 residues: Acetylglutamate kinase (295 aa).

Substrate is bound by residues 66 to 67 (GG), Arg-88, and Asn-193.

This sequence belongs to the acetylglutamate kinase family. ArgB subfamily.

The protein resides in the cytoplasm. It catalyses the reaction N-acetyl-L-glutamate + ATP = N-acetyl-L-glutamyl 5-phosphate + ADP. It participates in amino-acid biosynthesis; L-arginine biosynthesis; N(2)-acetyl-L-ornithine from L-glutamate: step 2/4. Functionally, catalyzes the ATP-dependent phosphorylation of N-acetyl-L-glutamate. The chain is Acetylglutamate kinase from Rhizobium etli (strain CIAT 652).